The chain runs to 336 residues: Fructose-1,6-bisphosphatase class 1 (336 aa).

Mg(2+) is bound by residues E90, D112, L114, and D115. Substrate contacts are provided by residues 115–118 (DGSS), N211, and K277. E283 lines the Mg(2+) pocket.

The protein belongs to the FBPase class 1 family. Homotetramer. Mg(2+) is required as a cofactor.

It localises to the cytoplasm. The enzyme catalyses beta-D-fructose 1,6-bisphosphate + H2O = beta-D-fructose 6-phosphate + phosphate. The protein operates within carbohydrate biosynthesis; gluconeogenesis. The sequence is that of Fructose-1,6-bisphosphatase class 1 from Pseudomonas putida (strain GB-1).